Here is a 98-residue protein sequence, read N- to C-terminus: Co-chaperonin GroES (98 aa).

The protein belongs to the GroES chaperonin family. Heptamer of 7 subunits arranged in a ring. Interacts with the chaperonin GroEL.

Its subcellular location is the cytoplasm. Functionally, together with the chaperonin GroEL, plays an essential role in assisting protein folding. The GroEL-GroES system forms a nano-cage that allows encapsulation of the non-native substrate proteins and provides a physical environment optimized to promote and accelerate protein folding. GroES binds to the apical surface of the GroEL ring, thereby capping the opening of the GroEL channel. The polypeptide is Co-chaperonin GroES (Neorickettsia sennetsu (strain ATCC VR-367 / Miyayama) (Ehrlichia sennetsu)).